Reading from the N-terminus, the 236-residue chain is Sperm flagellar protein 1 (236 aa).

A Calponin-homology (CH) domain is found at 7-112 (EEALHQLYLW…VLIPLRQRLE (106 aa)). Residues 118–177 (RKQGIGSLQELAPQDGTDYMDVGLSQKARGEGVPDPQGRGQLREGRLPVPRPPGDSQALQ) form a disordered region. An essential for homodimerization and microtubule bundling activity region spans residues 183 to 236 (ILQIAEKEQELLASQETVQVLQMKVRRLEHLLQLKNVRIEDLSRRLQQAERKQR).

As to quaternary structure, homodimer. Interacts with actin, TJP1, CGN and CDH1.

The protein resides in the cytoplasm. Its subcellular location is the cell projection. The protein localises to the cilium. It is found in the flagellum. It localises to the cytoskeleton. The protein resides in the cilium axoneme. Its subcellular location is the apical cell membrane. The protein localises to the basolateral cell membrane. It is found in the stress fiber. It localises to the microvillus. The protein resides in the lamellipodium. Its subcellular location is the filopodium. Its function is as follows. Microtubule-associated protein involved in the stabilization of microtubules along the axis of migration during radial intercalation. Promotes the establishment and stabilization of an axis of microtubules required for the active migration of cells into the outer epithelium. Microtubule-associated protein that promotes microtubule bundling and stabilizes microtubules against depolymerization in response to cold shock. Essential for ciliary central apparatus formation which requires both its microtubule-binding and bundling activities and for ciliary localization of HYDIN and SPAG6 in ependymal cilia. Binds actin in intestinal epithelial cells (IECs), essential for IECs survival and contributes to formation of filopodia and lamellipodia in migrating IECs. Regulates planar cell polarity signaling pathway and asymmetric microtubule accumulation in ciliated epithelia. In Bos taurus (Bovine), this protein is Sperm flagellar protein 1 (SPEF1).